Reading from the N-terminus, the 513-residue chain is OTU domain-containing protein 5-A (513 aa).

Disordered stretches follow at residues 1 to 75 (MTIL…GGAG) and 99 to 136 (GPGHSKRRRQVLSAGPGATGNCPDTDDGAGNNSEDEYE). Residues 166–289 (FIIKQMKEDG…NIHYNSVVNP (124 aa)) enclose the OTU domain. Residues 171–177 (MKEDGAC) are cys-loop. D174 is an active-site residue. C177 acts as the Nucleophile in catalysis. The segment at 226–236 (KRKNNCHGNHI) is variable-loop. The interval 277-282 (YHRNIH) is his-loop. Residue H282 is part of the active site. The tract at residues 387 to 446 (LEEWSGRSPRQRSTAGSPEHPDLHAELCMKPPSPGAPLILGKPPSPCAPGPSNQMSTGAD) is disordered.

This sequence belongs to the peptidase C85 family.

It catalyses the reaction Thiol-dependent hydrolysis of ester, thioester, amide, peptide and isopeptide bonds formed by the C-terminal Gly of ubiquitin (a 76-residue protein attached to proteins as an intracellular targeting signal).. Deubiquitinating enzyme that may function as negative regulator of the innate immune system. Has peptidase activity towards 'Lys-48'- and 'Lys-63'-linked polyubiquitin chains. Can also cleave 'Lys-11'-linked ubiquitin chains (in vitro). In Xenopus laevis (African clawed frog), this protein is OTU domain-containing protein 5-A (otud5-a).